The sequence spans 731 residues: MEELIVELRLFLELLDHEYLTSTVREKKAVLTNILLRMQSSKGFEVKDHAQKAETNNLPAPPQMPLPEIPQPWLPPDSGPPPLPTSSLPEGYYEEAVPLSPGKAPEYITSNYDSEAMGSSYESYDEEEEDGKGKKTQHQCHHEEASMDLVKDAKICAFLLRKKRFGQWTKLLCVIKDTKLLCYKSSKDQQPQMELPLQGCSITYIPRDSKKKKHELKITQQGTDPLVLAVQSKEQAEQWLKVIKEAYSGCSGPVDPECSPPPSASVPVNKAELEKKLSSERPSSDGEGVVENGVTTCNGKEQAKRKKPSKSEAKGTVSKVTGKKITKIIGLGKKKPSTDEQTSSAEEDVPTCGYLNVLSNSRWRERWCRVKDSKLILHKDRADLKTHIVSIPLRGCEVIPGLDSKHPLTFRLLRNGQEVAVLEASSSEDMGRWIGILLAETGSSTDPGALHYDYIDVEMSANVIQTAKQTFCFMNRRAVSTSPYLGSLSNGYAHPSGTALHYDDVPCVNGSLKNKKPPASSNGLPVKGRAPSSQQKKVESAGGVKRTASNAEQYKYGKNRVEADAKRLQSKEEELLKRKEALRNRLAQLRKERKDLRAAIEVNAGRKTQVALEDKLKRLEEECKQREAERVSLELELTEVKESLKKALAGGVTLGLAIEPKSGTSSPQSPVFRHRTLENSPISSCDTSDAEGPLPVNSAAVLKKSQPSSSSSPCRGHVLQKAREWELKNGT.

N-acetylmethionine is present on methionine 1. The interval 46–90 (VKDHAQKAETNNLPAPPQMPLPEIPQPWLPPDSGPPPLPTSSLPE) is disordered. Positions 59–84 (PAPPQMPLPEIPQPWLPPDSGPPPLP) are enriched in pro residues. Positions 70–73 (PQPW) match the SH3-binding motif. The SH2-binding 1 motif lies at 93-96 (YEEA). Residues 118–138 (GSSYESYDEEEEDGKGKKTQH) form a disordered region. Residues 152–248 (DAKICAFLLR…WLKVIKEAYS (97 aa)) enclose the PH 1 domain. Residues 252-318 (GPVDPECSPP…SKSEAKGTVS (67 aa)) form a disordered region. A compositionally biased stretch (basic and acidic residues) spans 271–284 (AELEKKLSSERPSS). Phosphoserine is present on residues serine 283 and serine 284. The PH 2 domain maps to 348-442 (DVPTCGYLNV…WIGILLAETG (95 aa)). An SH2-binding 2 motif is present at residues 452 to 457 (YDYIDV). A disordered region spans residues 511 to 550 (SLKNKKPPASSNGLPVKGRAPSSQQKKVESAGGVKRTASN). Residue serine 549 is modified to Phosphoserine. Residues 558–649 (KNRVEADAKR…VKESLKKALA (92 aa)) are a coiled coil. An interaction with F-actin region spans residues 595–638 (DLRAAIEVNAGRKTQVALEDKLKRLEEECKQREAERVSLELELT). The interval 657-731 (AIEPKSGTSS…AREWELKNGT (75 aa)) is disordered. Phosphoserine is present on residues serine 665, serine 666, and serine 669. Residue threonine 676 is modified to Phosphothreonine. A compositionally biased stretch (polar residues) spans 678-687 (ENSPISSCDT). Residues serine 680 and serine 688 each carry the phosphoserine modification. The segment covering 721-731 (KAREWELKNGT) has biased composition (basic and acidic residues).

In terms of assembly, monomer and homomultimer. Interacts via its C-terminus with F-actin; probably involving AFAP1 multimers. Interacts with activated SRC SH3-SH2 domains. Interacts via its PH 1 domain with PRKCA, PRKCB and PRKCI. Phosphorylated on tyrosine residues. In terms of tissue distribution, widely expressed with highest levels in brain.

The protein localises to the cytoplasm. Its subcellular location is the cytoskeleton. The protein resides in the stress fiber. In terms of biological role, can cross-link actin filaments into both network and bundle structures. May modulate changes in actin filament integrity and induce lamellipodia formation. May function as an adapter molecule that links other proteins, such as SRC and PKC to the actin cytoskeleton. This chain is Actin filament-associated protein 1 (Afap1), found in Rattus norvegicus (Rat).